An 859-amino-acid chain; its full sequence is Bifunctional heparan sulfate N-deacetylase/N-sulfotransferase 1 (859 aa).

At 1-13 (MIITPYLNPRLVK) the chain is on the cytoplasmic side. A helical; Signal-anchor for type II membrane protein transmembrane segment spans residues 14 to 34 (PLKWLAIIILLYFLYFSLFSI). Residues 34–575 (INKKPGKPRK…PRHQAILPPS (542 aa)) are heparan sulfate N-deacetylase 1. Residues 35 to 859 (NKKPGKPRKP…WLEEAVRIRV (825 aa)) are Lumenal-facing. 6 N-linked (GlcNAc...) asparagine glycosylation sites follow: Asn50, Asn74, Asn210, Asn262, Asn378, and Asn429. The heparan sulfate N-sulfotransferase 1 stretch occupies residues 576 to 859 (MSCSKKSLPD…WLEEAVRIRV (284 aa)). The active-site For sulfotransferase activity is the Lys593. 593–597 (KTGST) is a 3'-phosphoadenylyl sulfate binding site. Residues Asn608 and Asn643 are each glycosylated (N-linked (GlcNAc...) asparagine). Ser687 lines the 3'-phosphoadenylyl sulfate pocket. A glycan (N-linked (GlcNAc...) asparagine) is linked at Asn715. A disulfide bridge connects residues Cys796 and Cys805. Position 810-814 (810-814 (KGRKY)) interacts with 3'-phosphoadenylyl sulfate.

The protein belongs to the sulfotransferase 1 family. NDST subfamily. Monomer.

The protein localises to the golgi apparatus membrane. The catalysed reaction is alpha-D-glucosaminyl-[heparan sulfate](n) + 3'-phosphoadenylyl sulfate = N-sulfo-alpha-D-glucosaminyl-[heparan sulfate](n) + adenosine 3',5'-bisphosphate + 2 H(+). The protein operates within glycan metabolism; heparan sulfate biosynthesis. It participates in glycan metabolism; heparin biosynthesis. In terms of biological role, essential bifunctional enzyme that catalyzes both the N-deacetylation and the N-sulfation of glucosamine (GlcNAc) of the glycosaminoglycan in heparan sulfate. Modifies the GlcNAc-GlcA disaccharide repeating sugar backbone to make N-sulfated heparosan, a prerequisite substrate for later modifications in heparin biosynthesis. The polypeptide is Bifunctional heparan sulfate N-deacetylase/N-sulfotransferase 1 (hst-1) (Caenorhabditis briggsae).